Consider the following 309-residue polypeptide: Acetyl-coenzyme A carboxylase carboxyl transferase subunit beta (309 aa).

Residues 29-298 (NSDWTSCCKG…AINSSENETS (270 aa)) enclose the CoA carboxyltransferase N-terminal domain. Positions 35, 36, 52, and 55 each coordinate Zn(2+).

It belongs to the AccD/PCCB family. As to quaternary structure, acetyl-CoA carboxylase is a heterohexamer composed of biotin carboxyl carrier protein (AccB), biotin carboxylase (AccC) and two subunits each of ACCase subunit alpha (AccA) and ACCase subunit beta (AccD). The cofactor is Zn(2+).

It localises to the cytoplasm. It carries out the reaction N(6)-carboxybiotinyl-L-lysyl-[protein] + acetyl-CoA = N(6)-biotinyl-L-lysyl-[protein] + malonyl-CoA. It participates in lipid metabolism; malonyl-CoA biosynthesis; malonyl-CoA from acetyl-CoA: step 1/1. Its function is as follows. Component of the acetyl coenzyme A carboxylase (ACC) complex. Biotin carboxylase (BC) catalyzes the carboxylation of biotin on its carrier protein (BCCP) and then the CO(2) group is transferred by the transcarboxylase to acetyl-CoA to form malonyl-CoA. The chain is Acetyl-coenzyme A carboxylase carboxyl transferase subunit beta from Pelagibacter ubique (strain HTCC1062).